The primary structure comprises 436 residues: UDP-N-acetylmuramate--L-alanine ligase (436 aa).

111–117 (GTHGKTS) contacts ATP.

This sequence belongs to the MurCDEF family.

It localises to the cytoplasm. It carries out the reaction UDP-N-acetyl-alpha-D-muramate + L-alanine + ATP = UDP-N-acetyl-alpha-D-muramoyl-L-alanine + ADP + phosphate + H(+). It functions in the pathway cell wall biogenesis; peptidoglycan biosynthesis. In terms of biological role, cell wall formation. The polypeptide is UDP-N-acetylmuramate--L-alanine ligase (Pediococcus pentosaceus (strain ATCC 25745 / CCUG 21536 / LMG 10740 / 183-1w)).